A 40-amino-acid polypeptide reads, in one-letter code: Large ribosomal subunit protein bL33c (40 aa).

Belongs to the bacterial ribosomal protein bL33 family.

It is found in the plastid. It localises to the chloroplast. The polypeptide is Large ribosomal subunit protein bL33c (rpl33) (Pisum sativum (Garden pea)).